Here is a 383-residue protein sequence, read N- to C-terminus: Acetylornithine deacetylase (383 aa).

Residue histidine 80 coordinates Zn(2+). The active site involves aspartate 82. Position 112 (aspartate 112) interacts with Zn(2+). The active site involves glutamate 144. Zn(2+)-binding residues include glutamate 145, glutamate 169, and histidine 355.

It belongs to the peptidase M20A family. ArgE subfamily. Homodimer. It depends on Zn(2+) as a cofactor. Co(2+) serves as cofactor. Requires glutathione as cofactor.

The protein localises to the cytoplasm. It carries out the reaction N(2)-acetyl-L-ornithine + H2O = L-ornithine + acetate. It participates in amino-acid biosynthesis; L-arginine biosynthesis; L-ornithine from N(2)-acetyl-L-ornithine (linear): step 1/1. In terms of biological role, catalyzes the hydrolysis of the amide bond of N(2)-acetylated L-amino acids. Cleaves the acetyl group from N-acetyl-L-ornithine to form L-ornithine, an intermediate in L-arginine biosynthesis pathway, and a branchpoint in the synthesis of polyamines. The protein is Acetylornithine deacetylase of Salmonella choleraesuis (strain SC-B67).